Here is a 359-residue protein sequence, read N- to C-terminus: Fructose-bisphosphate aldolase, cytoplasmic isozyme (359 aa).

Residues R52 and K142 each contribute to the substrate site. E184 acts as the Proton acceptor in catalysis. Residue K226 is the Schiff-base intermediate with dihydroxyacetone-P of the active site.

Belongs to the class I fructose-bisphosphate aldolase family.

Its subcellular location is the cytoplasm. It catalyses the reaction beta-D-fructose 1,6-bisphosphate = D-glyceraldehyde 3-phosphate + dihydroxyacetone phosphate. The protein operates within carbohydrate degradation; glycolysis; D-glyceraldehyde 3-phosphate and glycerone phosphate from D-glucose: step 4/4. The protein is Fructose-bisphosphate aldolase, cytoplasmic isozyme (ALDC) of Cicer arietinum (Chickpea).